The sequence spans 269 residues: Formamidopyrimidine-DNA glycosylase (269 aa).

The active-site Schiff-base intermediate with DNA is Pro-2. Glu-3 acts as the Proton donor in catalysis. Lys-57 (proton donor; for beta-elimination activity) is an active-site residue. 3 residues coordinate DNA: His-90, Arg-109, and Arg-150. The FPG-type zinc finger occupies 235 to 269 (QVYGRKGEPCRVCGTPVVATKHAQRATFYCRHCQK). The Proton donor; for delta-elimination activity role is filled by Arg-259.

It belongs to the FPG family. Monomer. The cofactor is Zn(2+).

It catalyses the reaction Hydrolysis of DNA containing ring-opened 7-methylguanine residues, releasing 2,6-diamino-4-hydroxy-5-(N-methyl)formamidopyrimidine.. The catalysed reaction is 2'-deoxyribonucleotide-(2'-deoxyribose 5'-phosphate)-2'-deoxyribonucleotide-DNA = a 3'-end 2'-deoxyribonucleotide-(2,3-dehydro-2,3-deoxyribose 5'-phosphate)-DNA + a 5'-end 5'-phospho-2'-deoxyribonucleoside-DNA + H(+). In terms of biological role, involved in base excision repair of DNA damaged by oxidation or by mutagenic agents. Acts as a DNA glycosylase that recognizes and removes damaged bases. Has a preference for oxidized purines, such as 7,8-dihydro-8-oxoguanine (8-oxoG). Has AP (apurinic/apyrimidinic) lyase activity and introduces nicks in the DNA strand. Cleaves the DNA backbone by beta-delta elimination to generate a single-strand break at the site of the removed base with both 3'- and 5'-phosphates. This Salmonella arizonae (strain ATCC BAA-731 / CDC346-86 / RSK2980) protein is Formamidopyrimidine-DNA glycosylase.